Consider the following 167-residue polypeptide: Ribosome maturation factor RimP (167 aa).

Belongs to the RimP family.

The protein localises to the cytoplasm. In terms of biological role, required for maturation of 30S ribosomal subunits. In Cytophaga hutchinsonii (strain ATCC 33406 / DSM 1761 / CIP 103989 / NBRC 15051 / NCIMB 9469 / D465), this protein is Ribosome maturation factor RimP.